The sequence spans 538 residues: Telomerase Cajal body protein 1 (538 aa).

Residues 1 to 53 (MKTSEERLVVPDSLSSDQAPAPVPQGSPVDENTDSEPVPQPCGGDDRSQVAAD) form a disordered region. Phosphoserine is present on residues Ser-27 and Ser-87. Positions 92–128 (EQELSENVSLPVEDTNQPELASGEDVEGVSEEPGPVD) are disordered. Residues 113–128 (SGEDVEGVSEEPGPVD) are compositionally biased toward acidic residues. WD repeat units follow at residues 154–194 (AHSE…YSAT), 210–255 (EGDT…LRAS), 260–301 (NHLD…RDCE), 311–352 (GQSG…ALLG), 353–393 (GHQG…HLLW), and 399–438 (VTTNQRIYFDLDPSGQFLVSGNTNGMVSVWDISGAFGDSS). Disordered regions lie at residues 471-491 (QRMFPEPTNSGDEGEPEGDLP) and 509-538 (CGGGPDPSSPNDPQDEKGQGRAEGCGDGLI). Thr-478 bears the Phosphothreonine mark. The residue at position 480 (Ser-480) is a Phosphoserine. The span at 529 to 538 (RAEGCGDGLI) shows a compositional bias: gly residues.

It belongs to the TCAB1 family. Component of the telomerase holoenzyme complex composed of one molecule of TERT, one molecule of WRAP53/TCAB1, two molecules of H/ACA ribonucleoprotein complex subunits DKC1, NOP10, NHP2 and GAR1, and a telomerase RNA template component (TERC). The telomerase holoenzyme complex is associated with TEP1, SMG6/EST1A and POT1. Interacts with the chaperonin-containing T-complex (TRiC) complex; which mediates the folding of WRAP53/TCAB1. Interacts with COIL. Interacts with SMN1. Interacts with RNF8. Interacts with histone H2AX. Preferentially expressed in testis.

It is found in the nucleus. It localises to the cajal body. The protein localises to the chromosome. Its subcellular location is the telomere. In terms of biological role, RNA chaperone that plays a key role in telomere maintenance and RNA localization to Cajal bodies. Specifically recognizes and binds the Cajal body box (CAB box) present in both small Cajal body RNAs (scaRNAs) and telomerase RNA template component (TERC). Essential component of the telomerase holoenzyme complex, a ribonucleoprotein complex essential for the replication of chromosome termini that elongates telomeres in most eukaryotes. In the telomerase holoenzyme complex, required to stimulate the catalytic activity of the complex. Acts by specifically binding the CAB box of the TERC RNA and controlling the folding of the CR4/CR5 region of the TERC RNA, a critical step for telomerase activity. In addition, also controls telomerase holoenzyme complex localization to Cajal body. During S phase, required for delivery of TERC to telomeres during S phase and for telomerase activity. In addition to its role in telomere maintenance, also required for Cajal body formation, probably by mediating localization of scaRNAs to Cajal bodies. Also plays a role in DNA repair: relocalizes to sites of DNA double-strand breaks in response to DNA damage and promotes the repair of DNA double-strand breaks. Acts by recruiting the ubiquitin ligase RNF8 to DNA breaks and promote both homologous recombination (HR) and non-homologous end joining (NHEJ). This is Telomerase Cajal body protein 1 from Mesocricetus auratus (Golden hamster).